Reading from the N-terminus, the 632-residue chain is tRNA uridine 5-carboxymethylaminomethyl modification enzyme MnmG (632 aa).

Residues 15–20 (GAGHAG), Ile127, and Ser182 contribute to the FAD site. 276–290 (GPRYCPSIEDKIVRF) contributes to the NAD(+) binding site. Gln373 is an FAD binding site.

It belongs to the MnmG family. Homodimer. Heterotetramer of two MnmE and two MnmG subunits. FAD serves as cofactor.

Its subcellular location is the cytoplasm. NAD-binding protein involved in the addition of a carboxymethylaminomethyl (cmnm) group at the wobble position (U34) of certain tRNAs, forming tRNA-cmnm(5)s(2)U34. The chain is tRNA uridine 5-carboxymethylaminomethyl modification enzyme MnmG from Streptococcus pyogenes serotype M3 (strain SSI-1).